We begin with the raw amino-acid sequence, 352 residues long: Holliday junction branch migration complex subunit RuvB (352 aa).

Residues 1 to 181 form a large ATPase domain (RuvB-L) region; that stretch reads MTDRIVGAAK…FGIPVRLHFY (181 aa). ATP contacts are provided by residues leucine 20, arginine 21, glycine 62, lysine 65, threonine 66, threonine 67, 128–130, arginine 171, tyrosine 181, and arginine 218; that span reads EDF. Threonine 66 serves as a coordination point for Mg(2+). The segment at 182 to 252 is small ATPAse domain (RuvB-S); that stretch reads EVAELEGIVR…AADKALQRLE (71 aa). Residues 255–352 form a head domain (RuvB-H) region; it reads ELGLDALDHR…FDGDEENGSA (98 aa). DNA-binding residues include arginine 291, arginine 310, and arginine 315.

This sequence belongs to the RuvB family. In terms of assembly, homohexamer. Forms an RuvA(8)-RuvB(12)-Holliday junction (HJ) complex. HJ DNA is sandwiched between 2 RuvA tetramers; dsDNA enters through RuvA and exits via RuvB. An RuvB hexamer assembles on each DNA strand where it exits the tetramer. Each RuvB hexamer is contacted by two RuvA subunits (via domain III) on 2 adjacent RuvB subunits; this complex drives branch migration. In the full resolvosome a probable DNA-RuvA(4)-RuvB(12)-RuvC(2) complex forms which resolves the HJ.

The protein localises to the cytoplasm. It carries out the reaction ATP + H2O = ADP + phosphate + H(+). Functionally, the RuvA-RuvB-RuvC complex processes Holliday junction (HJ) DNA during genetic recombination and DNA repair, while the RuvA-RuvB complex plays an important role in the rescue of blocked DNA replication forks via replication fork reversal (RFR). RuvA specifically binds to HJ cruciform DNA, conferring on it an open structure. The RuvB hexamer acts as an ATP-dependent pump, pulling dsDNA into and through the RuvAB complex. RuvB forms 2 homohexamers on either side of HJ DNA bound by 1 or 2 RuvA tetramers; 4 subunits per hexamer contact DNA at a time. Coordinated motions by a converter formed by DNA-disengaged RuvB subunits stimulates ATP hydrolysis and nucleotide exchange. Immobilization of the converter enables RuvB to convert the ATP-contained energy into a lever motion, pulling 2 nucleotides of DNA out of the RuvA tetramer per ATP hydrolyzed, thus driving DNA branch migration. The RuvB motors rotate together with the DNA substrate, which together with the progressing nucleotide cycle form the mechanistic basis for DNA recombination by continuous HJ branch migration. Branch migration allows RuvC to scan DNA until it finds its consensus sequence, where it cleaves and resolves cruciform DNA. In Parvibaculum lavamentivorans (strain DS-1 / DSM 13023 / NCIMB 13966), this protein is Holliday junction branch migration complex subunit RuvB.